The following is a 208-amino-acid chain: Small ribosomal subunit protein uS3 (208 aa).

Positions 16–85 (VDEYLKNKLP…KPQIEVKQIE (70 aa)) constitute a KH type-2 domain.

It belongs to the universal ribosomal protein uS3 family. In terms of assembly, part of the 30S ribosomal subunit.

Functionally, binds the lower part of the 30S subunit head. The sequence is that of Small ribosomal subunit protein uS3 from Methanococcus aeolicus (strain ATCC BAA-1280 / DSM 17508 / OCM 812 / Nankai-3).